A 565-amino-acid polypeptide reads, in one-letter code: Receptor-like serine/threonine-protein kinase NCRK (565 aa).

The signal sequence occupies residues 1 to 23 (MKMRVETALAILLVLISIQQCYG). Over 24-103 (GVSNYTCTCF…SKKQYLSRKL (80 aa)) the chain is Extracellular. Residues N27, N37, N45, N77, and N85 are each glycosylated (N-linked (GlcNAc...) asparagine). A helical membrane pass occupies residues 104-124 (VIVILLFCGVLISLAFLASMI). Over 125–565 (CYICRKDKFS…PVLLEPSAHI (441 aa)) the chain is Cytoplasmic. A Protein kinase domain is found at 210-495 (FSSNSVIGHG…REVVQILSTI (286 aa)). ATP-binding positions include 216–224 (IGHGGSSCV) and K238. Catalysis depends on D339, which acts as the Proton acceptor. Phosphothreonine occurs at positions 378 and 383. Phosphotyrosine is present on Y391.

This sequence belongs to the protein kinase superfamily. Ser/Thr protein kinase family. As to quaternary structure, interacts with ARAC5. Phosphorylated. In terms of tissue distribution, mostly expressed in leaf primordia, root and shoot apical meristems, lateral root primordia, and stele of older roots and hypocotyls. In leaves and cotyledons, highest levels observed in trichomes, vasculatures, and hydathode endothem.

It localises to the cell membrane. The protein localises to the prevacuolar compartment membrane. It is found in the endosome. It carries out the reaction L-seryl-[protein] + ATP = O-phospho-L-seryl-[protein] + ADP + H(+). The catalysed reaction is L-threonyl-[protein] + ATP = O-phospho-L-threonyl-[protein] + ADP + H(+). The sequence is that of Receptor-like serine/threonine-protein kinase NCRK (NCRK) from Arabidopsis thaliana (Mouse-ear cress).